Reading from the N-terminus, the 551-residue chain is Protein MTL1 (551 aa).

Residues 1–35 form the signal peptide; that stretch reads MASCNPTRKKSSASSLSMWRTILMALTTLPLSVLS. At 36 to 361 the chain is on the extracellular side; it reads QELVPANSTT…HSGLSKKNRN (326 aa). Disordered regions lie at residues 108-143, 206-227, and 243-263; these read MQVSSSSTSSSSSEVTSSSSSSSISPSSSSSTIISS, PSSSTSSPPSSSSELTSSSYSS, and SSSSSSSSSSSSSSSSSSSSS. A helical transmembrane segment spans residues 362–382; it reads IIIGCVVGIGAPLILILLILI. The Cytoplasmic portion of the chain corresponds to 383 to 551; it reads YMFCVQPKKT…PNNGLNITNY (169 aa). The tract at residues 429-513 is disordered; it reads SSDSPIGSNN…SNSNSQDYND (85 aa). Positions 430–441 are enriched in polar residues; it reads SDSPIGSNNIQN. Positions 466-477 are enriched in acidic residues; sequence GYDDDDDDDAND. Ser481 and Ser482 each carry phosphoserine. Residues 498 to 508 show a composition bias toward low complexity; that stretch reads SASYSMSNSNS.

Belongs to the MID2 like cell wall stress sensor family.

The protein localises to the membrane. Its function is as follows. Involved in cell integrity signaling during vegetative growth at elevated temperature. Acts positively on the PKC1-MAPK pathway. Cell membrane sensor of oxidative stress in the cell integrity pathway upstream of PKC1. Required to transmit the oxidative signal to SLT2 and to restore the correct actin organization following oxidative stress. Multicopy suppressor of 1,3-beta-glucan synthase (GS) mutation. Also suppresses RGD1 null mutations. This Saccharomyces cerevisiae (strain ATCC 204508 / S288c) (Baker's yeast) protein is Protein MTL1 (MTL1).